The sequence spans 447 residues: MTAHEVNFDGLVGLTHHYAGLSFGNEASTRHRFQVSNPRLAVKQGLLKMKALADAGFPQAVIPPHERPFIPALRQLGFTGSDEQILDKVARQAPRWLSSVSSASPMWVANAATVCPSADALDGKVHLTVANLNNKFHRALEAPVTEALLRAIFRDESQFSVHSALPQVALLGDEGAANHNRLGGEYGSAGVQLFVYGREEENEIRPARYPARQSREASEAVARLNQVNPQQVIFAQQNPEVIDQGVFHNDVIAVSNRQVLFCHEAAFARQKVLINQLRTRVDGFMAIEVPAGEVSVSDAVATYLFNSQLLSRDDGSMLLVLPRECQDHVGVWRYLNKLVAEDNPISAMQVFDLRESMANGGGPACLRLRVVLTEEERRAVNPAVMMNDALFTALNAWADRYYRDRLTAADLADPLLLREGREALDVLTRLLDLGSVYPFQQTGAADG.

Substrate is bound by residues 19-28 (AGLSFGNEAS), N110, and 137-138 (HR). Residue E174 is part of the active site. R212 contributes to the substrate binding site. H248 is a catalytic residue. Substrate-binding residues include D250 and N359. Catalysis depends on C365, which acts as the Nucleophile.

It belongs to the succinylarginine dihydrolase family. As to quaternary structure, homodimer.

It catalyses the reaction N(2)-succinyl-L-arginine + 2 H2O + 2 H(+) = N(2)-succinyl-L-ornithine + 2 NH4(+) + CO2. The protein operates within amino-acid degradation; L-arginine degradation via AST pathway; L-glutamate and succinate from L-arginine: step 2/5. Its function is as follows. Catalyzes the hydrolysis of N(2)-succinylarginine into N(2)-succinylornithine, ammonia and CO(2). The protein is N-succinylarginine dihydrolase of Salmonella agona (strain SL483).